Here is a 184-residue protein sequence, read N- to C-terminus: Transmembrane protein 140 (184 aa).

At 1 to 12 (MAISRVWRNRLS) the chain is on the cytoplasmic side. A helical membrane pass occupies residues 13-33 (FMAIMILVAMVLSLMSYALLW). The Extracellular portion of the chain corresponds to 34–83 (KAGNLTDVPNLRIGFYNFCLWKEDIGSLECYNFPELGVLGIPQVGLALAR). The N-linked (GlcNAc...) asparagine glycan is linked to asparagine 37. Residues 84–104 (LGVYGALVLAVFVPLPLLLAQ) traverse the membrane as a helical segment. The Cytoplasmic portion of the chain corresponds to 105 to 117 (CNSDEGEWRLAVG). Residues 118–138 (FLGASSVLLAGGLSLFLFLVW) form a helical membrane-spanning segment. Over 139–149 (KWLRLSFLGPG) the chain is Extracellular. Residues 150-170 (FLSLCLAQALLIILLMAMVMF) traverse the membrane as a helical segment. Topologically, residues 171-184 (PPRDKKDKNHWENC) are cytoplasmic.

It is found in the membrane. In Rattus norvegicus (Rat), this protein is Transmembrane protein 140 (Tmem140).